We begin with the raw amino-acid sequence, 365 residues long: MMDKGAPRGTRTGFTTGACSAAAARAAVIGLVTGQVPDHVECLLPNGDLVRFAVHDGRVDSASAHAMVIKDAGDDPDCTDKAHLTADVRLLPDLAGQVVLAGGTGVGTVTMPGLGLAVGGPAINPVPRRNIEANVRAVGAALLDEVGLEVAISVPQGEEMAKKTLNARLGILGGISILGTTGIVKPYSTAAYRASVVQGVQVAGTLGHGVVVLTTGGRTEKFVMAEMPELPEPAFVQMGDFLRYAMGAAVKAGIRKVVIGGMVGKLTKIAQGETITHAGRAEVDTGLLADLAAGLGAPPDVCDAIRGNETARYAGERMDALGLGTAFHTALAQRVIQTLRTRYPDQFELKVLVCDFEGRKIAEAP.

This sequence belongs to the CbiD family.

It carries out the reaction Co-precorrin-5B + S-adenosyl-L-methionine = Co-precorrin-6A + S-adenosyl-L-homocysteine. The protein operates within cofactor biosynthesis; adenosylcobalamin biosynthesis; cob(II)yrinate a,c-diamide from sirohydrochlorin (anaerobic route): step 6/10. Its function is as follows. Catalyzes the methylation of C-1 in cobalt-precorrin-5B to form cobalt-precorrin-6A. This Variovorax paradoxus (strain S110) protein is Cobalt-precorrin-5B C(1)-methyltransferase.